The sequence spans 155 residues: Large ribosomal subunit protein eL24 (155 aa).

The tract at residues 92–155 is disordered; sequence AKRNMKPEVR…KAAPRVGGKR (64 aa). Over residues 96 to 117 the composition is skewed to basic and acidic residues; the sequence is MKPEVRKAQREQAIKQAKEQKK. Residues 124 to 133 are compositionally biased toward low complexity; that stretch reads KTTAPPTKGK.

This sequence belongs to the eukaryotic ribosomal protein eL24 family.

This is Large ribosomal subunit protein eL24 (RpL24) from Plutella xylostella (Diamondback moth).